The sequence spans 116 residues: Ribonuclease P protein component (116 aa).

The protein belongs to the RnpA family. Consists of a catalytic RNA component (M1 or rnpB) and a protein subunit.

The catalysed reaction is Endonucleolytic cleavage of RNA, removing 5'-extranucleotides from tRNA precursor.. RNaseP catalyzes the removal of the 5'-leader sequence from pre-tRNA to produce the mature 5'-terminus. It can also cleave other RNA substrates such as 4.5S RNA. The protein component plays an auxiliary but essential role in vivo by binding to the 5'-leader sequence and broadening the substrate specificity of the ribozyme. This chain is Ribonuclease P protein component, found in Mycobacterium bovis (strain ATCC BAA-935 / AF2122/97).